A 552-amino-acid chain; its full sequence is 3-hydroxy-3-methylglutaryl-coenzyme A reductase 1 (552 aa).

Low complexity-rich tracts occupy residues 79–99 (QHNQQQQQKQQPSQDYIQQPQ) and 112–122 (QQQQQQQQQQQ). The interval 79 to 138 (QHNQQQQQKQQPSQDYIQQPQNDNNINSGKEQEQQQQQQQQQQQTPDITNQPTKTNKKIP) is disordered. Residues 123 to 132 (TPDITNQPTK) show a composition bias toward polar residues. Glutamate 237 (charge relay system) is an active-site residue. Residue asparagine 288 is glycosylated (N-linked (GlcNAc...) asparagine). The active-site Charge relay system is the lysine 369. An N-linked (GlcNAc...) asparagine glycan is attached at asparagine 375. Aspartate 445 (charge relay system) is an active-site residue. Histidine 543 (proton donor) is an active-site residue.

The protein belongs to the HMG-CoA reductase family.

Its subcellular location is the endoplasmic reticulum membrane. The catalysed reaction is (R)-mevalonate + 2 NADP(+) + CoA = (3S)-3-hydroxy-3-methylglutaryl-CoA + 2 NADPH + 2 H(+). Its pathway is metabolic intermediate biosynthesis; (R)-mevalonate biosynthesis; (R)-mevalonate from acetyl-CoA: step 3/3. Functionally, this transmembrane glycoprotein is involved in the control of cholesterol biosynthesis. It is the rate-limiting enzyme of the sterol biosynthesis. The protein is 3-hydroxy-3-methylglutaryl-coenzyme A reductase 1 (hmgA) of Dictyostelium discoideum (Social amoeba).